A 246-amino-acid chain; its full sequence is tRNA (guanine-N(1)-)-methyltransferase (246 aa).

S-adenosyl-L-methionine is bound by residues glycine 113 and 133–138; that span reads IGDYVL.

This sequence belongs to the RNA methyltransferase TrmD family. Homodimer.

The protein resides in the cytoplasm. The enzyme catalyses guanosine(37) in tRNA + S-adenosyl-L-methionine = N(1)-methylguanosine(37) in tRNA + S-adenosyl-L-homocysteine + H(+). Its function is as follows. Specifically methylates guanosine-37 in various tRNAs. The protein is tRNA (guanine-N(1)-)-methyltransferase of Haemophilus influenzae (strain PittEE).